Reading from the N-terminus, the 252-residue chain is Triosephosphate isomerase (252 aa).

Substrate is bound at residue 10–12; the sequence is NWK. The active-site Electrophile is His96. Catalysis depends on Glu168, which acts as the Proton acceptor. Residues Gly174, Ser214, and 235 to 236 each bind substrate; that span reads GG.

It belongs to the triosephosphate isomerase family. Homodimer.

The protein resides in the cytoplasm. The catalysed reaction is D-glyceraldehyde 3-phosphate = dihydroxyacetone phosphate. Its pathway is carbohydrate biosynthesis; gluconeogenesis. The protein operates within carbohydrate degradation; glycolysis; D-glyceraldehyde 3-phosphate from glycerone phosphate: step 1/1. Functionally, involved in the gluconeogenesis. Catalyzes stereospecifically the conversion of dihydroxyacetone phosphate (DHAP) to D-glyceraldehyde-3-phosphate (G3P). This is Triosephosphate isomerase from Streptococcus pneumoniae serotype 2 (strain D39 / NCTC 7466).